A 253-amino-acid chain; its full sequence is 5'-nucleotidase SurE 2 (253 aa).

A divalent metal cation is bound by residues D8, D9, S39, and N92.

The protein belongs to the SurE nucleotidase family. It depends on a divalent metal cation as a cofactor.

The protein resides in the cytoplasm. It carries out the reaction a ribonucleoside 5'-phosphate + H2O = a ribonucleoside + phosphate. Its function is as follows. Nucleotidase that shows phosphatase activity on nucleoside 5'-monophosphates. This chain is 5'-nucleotidase SurE 2, found in Burkholderia lata (strain ATCC 17760 / DSM 23089 / LMG 22485 / NCIMB 9086 / R18194 / 383).